The primary structure comprises 237 residues: uncharacterized protein (237 aa).

Residues 213-237 (GQGKYLKLDSNTTENKTTKQNETGG) are disordered. Positions 223-237 (NTTENKTTKQNETGG) are enriched in low complexity.

This is an uncharacterized protein from Methanothermobacter thermautotrophicus (Methanobacterium thermoformicicum).